The following is a 210-amino-acid chain: Probable nicotinate-nucleotide adenylyltransferase (210 aa).

It belongs to the NadD family.

It carries out the reaction nicotinate beta-D-ribonucleotide + ATP + H(+) = deamido-NAD(+) + diphosphate. Its pathway is cofactor biosynthesis; NAD(+) biosynthesis; deamido-NAD(+) from nicotinate D-ribonucleotide: step 1/1. In terms of biological role, catalyzes the reversible adenylation of nicotinate mononucleotide (NaMN) to nicotinic acid adenine dinucleotide (NaAD). This chain is Probable nicotinate-nucleotide adenylyltransferase, found in Streptococcus pyogenes serotype M1.